A 702-amino-acid polypeptide reads, in one-letter code: Vacuolar protein sorting-associated protein 52 homolog (702 aa).

The stretch at 505-535 (KEMGAKMEAVLENSEDSIEQLLTRMSAMQQT) forms a coiled coil.

This sequence belongs to the VPS52 family. As to quaternary structure, component of the Golgi-associated retrograde protein (GARP) complex, also called VFT (VPS fifty-three) complex, composed of vps-51, vps-52, vps-53 and vps-54. Within the complex interacts with vps-53 and vps-54. Interacts with the small GTPases rab-6.1 and rab-6.2. Ubiquitously expressed, with particularly strong expression in neuronal cells. Specifically expressed in head and tail neurons and in the pharynx and ventral cord motor neurons.

It localises to the golgi apparatus. The protein resides in the trans-Golgi network. Its subcellular location is the perikaryon. The protein localises to the cytoplasm. It is found in the perinuclear region. Its function is as follows. Acts as a component of the GARP complex that is involved in retrograde transport from early and late endosomes to the trans-Golgi network (TGN). The GARP complex facilitates tethering as well as SNARE complex assembly at the Golgi. Plays a role in the trafficking of cargo to dense-core vesicles, probably through association with the EARP-interacting protein eipr-1. Important for neuronal function. This Caenorhabditis elegans protein is Vacuolar protein sorting-associated protein 52 homolog.